Here is a 333-residue protein sequence, read N- to C-terminus: Dehydrodolichyl diphosphate synthase complex subunit Dhdds (333 aa).

Residues Asp34, Gly35, Arg37, Arg38, and Arg85 each contribute to the (2E,6E)-farnesyl diphosphate site. Residue Asp34 coordinates Mg(2+). Isopentenyl diphosphate contacts are provided by Arg38, Arg85, Arg205, Arg211, and Ser213.

This sequence belongs to the UPP synthase family. As to quaternary structure, the active dehydrodolichyl diphosphate synthase complex is a heterotetramer composed of a dimer of heterodimer of DHDDS and NUS1. Interacts with NPC2. It depends on Mg(2+) as a cofactor.

It localises to the endoplasmic reticulum membrane. It carries out the reaction n isopentenyl diphosphate + (2E,6E)-farnesyl diphosphate = a di-trans,poly-cis-polyprenyl diphosphate + n diphosphate. It functions in the pathway protein modification; protein glycosylation. The protein operates within lipid metabolism. With NUS1, forms the dehydrodolichyl diphosphate synthase (DDS) complex, an essential component of the dolichol monophosphate (Dol-P) biosynthetic machinery. Both subunits contribute to enzymatic activity, i.e. condensation of multiple copies of isopentenyl pyrophosphate (IPP) to farnesyl pyrophosphate (FPP) to produce dehydrodolichyl diphosphate (Dedol-PP), a precursor of dolichol phosphate which is utilized as a sugar carrier in protein glycosylation in the endoplasmic reticulum (ER). Synthesizes long-chain polyprenols, mostly of C95 and C100 chain length. Regulates the glycosylation and stability of nascent NPC2, thereby promoting trafficking of LDL-derived cholesterol. This chain is Dehydrodolichyl diphosphate synthase complex subunit Dhdds, found in Mus musculus (Mouse).